The following is a 453-amino-acid chain: Homogentisate 1,2-dioxygenase (453 aa).

H304 functions as the Proton acceptor in the catalytic mechanism. Fe cation contacts are provided by H347 and E353. Positions 362 and 383 each coordinate homogentisate. Position 383 (H383) interacts with Fe cation.

The protein belongs to the homogentisate dioxygenase family. In terms of assembly, hexamer; dimer of trimers. Fe cation serves as cofactor.

It carries out the reaction homogentisate + O2 = 4-maleylacetoacetate + H(+). Its pathway is amino-acid degradation; L-phenylalanine degradation; acetoacetate and fumarate from L-phenylalanine: step 4/6. In terms of biological role, involved in the catabolism of homogentisate (2,5-dihydroxyphenylacetate or 2,5-OH-PhAc), a central intermediate in the degradation of phenylalanine and tyrosine. Catalyzes the oxidative ring cleavage of the aromatic ring of homogentisate to yield maleylacetoacetate. The protein is Homogentisate 1,2-dioxygenase of Sinorhizobium fredii (strain NBRC 101917 / NGR234).